The sequence spans 134 residues: Large ribosomal subunit protein uL16c (134 aa).

Belongs to the universal ribosomal protein uL16 family. In terms of assembly, part of the 50S ribosomal subunit.

The protein resides in the plastid. It localises to the chloroplast. The sequence is that of Large ribosomal subunit protein uL16c from Pinus thunbergii (Japanese black pine).